The following is a 265-amino-acid chain: Mlc titration factor A (265 aa).

Positions 111, 148, 152, and 211 each coordinate Zn(2+).

Belongs to the MtfA family. Interacts with Mlc. Zn(2+) is required as a cofactor.

The protein localises to the cytoplasm. Involved in the modulation of the activity of the glucose-phosphotransferase system (glucose-PTS). Interacts with the transcriptional repressor Mlc, preventing its interaction with DNA and leading to the modulation of expression of genes regulated by Mlc, including ptsG, which encodes the PTS system glucose-specific EIICB component. Its function is as follows. Shows zinc-dependent metallopeptidase activity. In Escherichia coli O139:H28 (strain E24377A / ETEC), this protein is Mlc titration factor A.